A 1447-amino-acid polypeptide reads, in one-letter code: Gag-Pol polyprotein (1447 aa).

Glycine 2 is lipidated: N-myristoyl glycine; by host. Positions 7 to 31 (VLSGGELDRWEKIRLRPGGKKKYKL) are interaction with Gp41. The interval 8 to 43 (LSGGELDRWEKIRLRPGGKKKYKLKHIVWASRELER) is interaction with host CALM1. Positions 12 to 19 (ELDRWEKI) are interaction with host AP3D1. An interaction with membrane phosphatidylinositol 4,5-bisphosphate and RNA region spans residues 14–33 (DRWEKIRLRPGGKKKYKLKH). The Nuclear export signal motif lies at 16–22 (WEKIRLR). The Nuclear localization signal motif lies at 26–32 (KKKYKLK). Positions 73–77 (EELRS) are interaction with membrane phosphatidylinositol 4,5-bisphosphate. Residues 106-128 (EEQNKSKKKAQQAAADTGHSSQV) are disordered. A Phosphotyrosine; by host modification is found at tyrosine 132. The segment at 189-227 (NTVGGHQAAMQMLKETINEEAAEWDRVHPVHAGPIAPGQ) is interaction with human PPIA/CYPA and NUP153. Residues 277-363 (YSPTSILDIR…GGPGHKARVL (87 aa)) form a dimerization/Multimerization of capsid protein p24 region. At arginine 387 the chain carries Asymmetric dimethylarginine; in Nucleocapsid protein p7; by host PRMT6. The CCHC-type 1 zinc-finger motif lies at 390–407 (VKCFNCGKEGHTARNCRA). Arginine 409 carries the asymmetric dimethylarginine; in Nucleocapsid protein p7; by host PRMT6 modification. The segment at 411-428 (KGCWKCGKEGHQMKDCTE) adopts a CCHC-type 2 zinc-finger fold. The interval 446-493 (REFSSEQTRANSPTISSEQTRANSPTRRELQVWGRDNNSPSEAGADRQ) is disordered. Residues 450–470 (SEQTRANSPTISSEQTRANSP) show a composition bias toward polar residues. The tract at residues 501–505 (PQITL) is dimerization of protease. A Peptidase A2 domain is found at 520–589 (KEALLDTGAD…TPVNIIGRNL (70 aa)). Aspartate 525 acts as the For protease activity; shared with dimeric partner in catalysis. 2 dimerization of protease regions span residues 549 to 555 (GIGGFIK) and 588 to 600 (NLLT…LNFP). Residues 643-833 (EGKISKIGPE…PPFLWMGYEL (191 aa)) enclose the Reverse transcriptase domain. Mg(2+) is bound by residues aspartate 709, aspartate 784, and aspartate 785. Residues 826–834 (FLWMGYELH) form an RT 'primer grip' region. Residues 997-1013 (WETWWTEYWQATWIPEW) carry the Tryptophan repeat motif motif. The 124-residue stretch at 1033–1156 (IVGAETFYVD…VDKLVSAGIR (124 aa)) folds into the RNase H type-1 domain. Positions 1042, 1077, 1097, and 1148 each coordinate Mg(2+). The segment at 1162–1203 (DGIDKAQDEHEKYHSNWRAMASDFNLPPVVAKEIVASCDKCQ) adopts an Integrase-type zinc-finger fold. Positions 1171, 1175, 1199, and 1202 each coordinate Zn(2+). One can recognise an Integrase catalytic domain in the interval 1213-1363 (VDCSPGIWQL…SAGERIVDII (151 aa)). Mg(2+) is bound by residues aspartate 1223, aspartate 1275, and glutamate 1311. The integrase-type DNA-binding region spans 1382-1429 (FRVYYRDSRNPLWKGPAKLLWKGEGAVVIQDNSDIKVVPRRKAKIIRD).

Homotrimer; further assembles as hexamers of trimers. Interacts with gp41 (via C-terminus). Interacts with host CALM1; this interaction induces a conformational change in the Matrix protein, triggering exposure of the myristate group. Interacts with host AP3D1; this interaction allows the polyprotein trafficking to multivesicular bodies during virus assembly. Part of the pre-integration complex (PIC) which is composed of viral genome, matrix protein, Vpr and integrase. As to quaternary structure, homodimer; the homodimer further multimerizes as homohexamers or homopentamers. Interacts with human PPIA/CYPA; This interaction stabilizes the capsid. Interacts with human NUP153. Interacts with host PDZD8; this interaction stabilizes the capsid. Interacts with monkey TRIM5; this interaction destabilizes the capsid. In terms of assembly, homodimer, whose active site consists of two apposed aspartic acid residues. Heterodimer of p66 RT and p51 RT (RT p66/p51). Heterodimerization of RT is essential for DNA polymerase activity. The overall folding of the subdomains is similar in p66 RT and p51 RT but the spatial arrangements of the subdomains are dramatically different. As to quaternary structure, homotetramer; may further associate as a homohexadecamer. Part of the pre-integration complex (PIC) which is composed of viral genome, matrix protein, Vpr and integrase. Interacts with human SMARCB1/INI1 and human PSIP1/LEDGF isoform 1. Interacts with human KPNA3; this interaction might play a role in nuclear import of the pre-integration complex. Interacts with human NUP153; this interaction might play a role in nuclear import of the pre-integration complex. Mg(2+) is required as a cofactor. Post-translationally, specific enzymatic cleavages by the viral protease yield mature proteins. The protease is released by autocatalytic cleavage. The polyprotein is cleaved during and after budding, this process is termed maturation. Proteolytic cleavage of p66 RT removes the RNase H domain to yield the p51 RT subunit. Nucleocapsid protein p7 might be further cleaved after virus entry. Tyrosine phosphorylated presumably in the virion by a host kinase. Phosphorylation is apparently not a major regulator of membrane association. In terms of processing, phosphorylated possibly by host MAPK1; this phosphorylation is necessary for Pin1-mediated virion uncoating. Post-translationally, methylated by host PRMT6, impairing its function by reducing RNA annealing and the initiation of reverse transcription.

It localises to the host cell membrane. It is found in the host endosome. The protein resides in the host multivesicular body. The protein localises to the virion membrane. Its subcellular location is the host nucleus. It localises to the host cytoplasm. It is found in the virion. It catalyses the reaction Specific for a P1 residue that is hydrophobic, and P1' variable, but often Pro.. The catalysed reaction is 3'-end directed exonucleolytic cleavage of viral RNA-DNA hybrid.. It carries out the reaction Endohydrolysis of RNA in RNA/DNA hybrids. Three different cleavage modes: 1. sequence-specific internal cleavage of RNA. Human immunodeficiency virus type 1 and Moloney murine leukemia virus enzymes prefer to cleave the RNA strand one nucleotide away from the RNA-DNA junction. 2. RNA 5'-end directed cleavage 13-19 nucleotides from the RNA end. 3. DNA 3'-end directed cleavage 15-20 nucleotides away from the primer terminus.. The enzyme catalyses DNA(n) + a 2'-deoxyribonucleoside 5'-triphosphate = DNA(n+1) + diphosphate. With respect to regulation, protease: The viral protease is inhibited by many synthetic protease inhibitors (PIs), such as amprenavir, atazanavir, indinavir, loprinavir, nelfinavir, ritonavir and saquinavir. Use of protease inhibitors in tritherapy regimens permit more ambitious therapeutic strategies. Reverse transcriptase/ribonuclease H: RT can be inhibited either by nucleoside RT inhibitors (NRTIs) or by non nucleoside RT inhibitors (NNRTIs). NRTIs act as chain terminators, whereas NNRTIs inhibit DNA polymerization by binding a small hydrophobic pocket near the RT active site and inducing an allosteric change in this region. Classical NRTIs are abacavir, adefovir (PMEA), didanosine (ddI), lamivudine (3TC), stavudine (d4T), tenofovir (PMPA), zalcitabine (ddC), and zidovudine (AZT). Classical NNRTIs are atevirdine (BHAP U-87201E), delavirdine, efavirenz (DMP-266), emivirine (I-EBU), and nevirapine (BI-RG-587). The tritherapies used as a basic effective treatment of AIDS associate two NRTIs and one NNRTI. Functionally, mediates, with Gag polyprotein, the essential events in virion assembly, including binding the plasma membrane, making the protein-protein interactions necessary to create spherical particles, recruiting the viral Env proteins, and packaging the genomic RNA via direct interactions with the RNA packaging sequence (Psi). Gag-Pol polyprotein may regulate its own translation, by the binding genomic RNA in the 5'-UTR. At low concentration, the polyprotein would promote translation, whereas at high concentration, the polyprotein would encapsidate genomic RNA and then shut off translation. In terms of biological role, targets the polyprotein to the plasma membrane via a multipartite membrane-binding signal, that includes its myristoylated N-terminus. Matrix protein is part of the pre-integration complex. Implicated in the release from host cell mediated by Vpu. Binds to RNA. Forms the conical core that encapsulates the genomic RNA-nucleocapsid complex in the virion. Most core are conical, with only 7% tubular. The core is constituted by capsid protein hexamer subunits. The core is disassembled soon after virion entry. Host restriction factors such as TRIM5-alpha or TRIMCyp bind retroviral capsids and cause premature capsid disassembly, leading to blocks in reverse transcription. Capsid restriction by TRIM5 is one of the factors which restricts HIV-1 to the human species. Host PIN1 apparently facilitates the virion uncoating. On the other hand, interactions with PDZD8 or CYPA stabilize the capsid. Its function is as follows. Encapsulates and protects viral dimeric unspliced genomic RNA (gRNA). Binds these RNAs through its zinc fingers. Acts as a nucleic acid chaperone which is involved in rearangement of nucleic acid secondary structure during gRNA retrotranscription. Also facilitates template switch leading to recombination. As part of the polyprotein, participates in gRNA dimerization, packaging, tRNA incorporation and virion assembly. Functionally, aspartyl protease that mediates proteolytic cleavages of Gag and Gag-Pol polyproteins during or shortly after the release of the virion from the plasma membrane. Cleavages take place as an ordered, step-wise cascade to yield mature proteins. This process is called maturation. Displays maximal activity during the budding process just prior to particle release from the cell. Also cleaves Nef and Vif, probably concomitantly with viral structural proteins on maturation of virus particles. Hydrolyzes host EIF4GI and PABP1 in order to shut off the capped cellular mRNA translation. The resulting inhibition of cellular protein synthesis serves to ensure maximal viral gene expression and to evade host immune response. Also mediates cleavage of host YTHDF3. Mediates cleavage of host CARD8, thereby activating the CARD8 inflammasome, leading to the clearance of latent HIV-1 in patient CD4(+) T-cells after viral reactivation; in contrast, HIV-1 can evade CARD8-sensing when its protease remains inactive in infected cells prior to viral budding. In terms of biological role, multifunctional enzyme that converts the viral RNA genome into dsDNA in the cytoplasm, shortly after virus entry into the cell. This enzyme displays a DNA polymerase activity that can copy either DNA or RNA templates, and a ribonuclease H (RNase H) activity that cleaves the RNA strand of RNA-DNA heteroduplexes in a partially processive 3' to 5' endonucleasic mode. Conversion of viral genomic RNA into dsDNA requires many steps. A tRNA(3)-Lys binds to the primer-binding site (PBS) situated at the 5'-end of the viral RNA. RT uses the 3' end of the tRNA primer to perform a short round of RNA-dependent minus-strand DNA synthesis. The reading proceeds through the U5 region and ends after the repeated (R) region which is present at both ends of viral RNA. The portion of the RNA-DNA heteroduplex is digested by the RNase H, resulting in a ssDNA product attached to the tRNA primer. This ssDNA/tRNA hybridizes with the identical R region situated at the 3' end of viral RNA. This template exchange, known as minus-strand DNA strong stop transfer, can be either intra- or intermolecular. RT uses the 3' end of this newly synthesized short ssDNA to perform the RNA-dependent minus-strand DNA synthesis of the whole template. RNase H digests the RNA template except for two polypurine tracts (PPTs) situated at the 5'-end and near the center of the genome. It is not clear if both polymerase and RNase H activities are simultaneous. RNase H probably can proceed both in a polymerase-dependent (RNA cut into small fragments by the same RT performing DNA synthesis) and a polymerase-independent mode (cleavage of remaining RNA fragments by free RTs). Secondly, RT performs DNA-directed plus-strand DNA synthesis using the PPTs that have not been removed by RNase H as primers. PPTs and tRNA primers are then removed by RNase H. The 3' and 5' ssDNA PBS regions hybridize to form a circular dsDNA intermediate. Strand displacement synthesis by RT to the PBS and PPT ends produces a blunt ended, linear dsDNA copy of the viral genome that includes long terminal repeats (LTRs) at both ends. Catalyzes viral DNA integration into the host chromosome, by performing a series of DNA cutting and joining reactions. This enzyme activity takes place after virion entry into a cell and reverse transcription of the RNA genome in dsDNA. The first step in the integration process is 3' processing. This step requires a complex comprising the viral genome, matrix protein, Vpr and integrase. This complex is called the pre-integration complex (PIC). The integrase protein removes 2 nucleotides from each 3' end of the viral DNA, leaving recessed CA OH's at the 3' ends. In the second step, the PIC enters cell nucleus. This process is mediated through integrase and Vpr proteins, and allows the virus to infect a non dividing cell. This ability to enter the nucleus is specific of lentiviruses, other retroviruses cannot and rely on cell division to access cell chromosomes. In the third step, termed strand transfer, the integrase protein joins the previously processed 3' ends to the 5' ends of strands of target cellular DNA at the site of integration. The 5'-ends are produced by integrase-catalyzed staggered cuts, 5 bp apart. A Y-shaped, gapped, recombination intermediate results, with the 5'-ends of the viral DNA strands and the 3' ends of target DNA strands remaining unjoined, flanking a gap of 5 bp. The last step is viral DNA integration into host chromosome. This involves host DNA repair synthesis in which the 5 bp gaps between the unjoined strands are filled in and then ligated. Since this process occurs at both cuts flanking the HIV genome, a 5 bp duplication of host DNA is produced at the ends of HIV-1 integration. Alternatively, Integrase may catalyze the excision of viral DNA just after strand transfer, this is termed disintegration. The chain is Gag-Pol polyprotein (gag-pol) from Human immunodeficiency virus type 1 group M subtype B (isolate BH10) (HIV-1).